We begin with the raw amino-acid sequence, 220 residues long: Phosphoenolpyruvate guanylyltransferase (220 aa).

3 residues coordinate phosphoenolpyruvate: Thr154, Gly169, and Ser172.

Belongs to the CofC family.

It carries out the reaction phosphoenolpyruvate + GTP + H(+) = enolpyruvoyl-2-diphospho-5'-guanosine + diphosphate. It functions in the pathway cofactor biosynthesis; coenzyme F420 biosynthesis. Guanylyltransferase that catalyzes the activation of phosphoenolpyruvate (PEP) as enolpyruvoyl-2-diphospho-5'-guanosine, via the condensation of PEP with GTP. It is involved in the biosynthesis of coenzyme F420, a hydride carrier cofactor. In Mycolicibacterium paratuberculosis (strain ATCC BAA-968 / K-10) (Mycobacterium paratuberculosis), this protein is Phosphoenolpyruvate guanylyltransferase.